The primary structure comprises 417 residues: UDP-N-acetylmuramoylalanine--D-glutamate ligase (417 aa).

An ATP-binding site is contributed by 104–110; sequence GSNGKST.

The protein belongs to the MurCDEF family.

It is found in the cytoplasm. It carries out the reaction UDP-N-acetyl-alpha-D-muramoyl-L-alanine + D-glutamate + ATP = UDP-N-acetyl-alpha-D-muramoyl-L-alanyl-D-glutamate + ADP + phosphate + H(+). It participates in cell wall biogenesis; peptidoglycan biosynthesis. Functionally, cell wall formation. Catalyzes the addition of glutamate to the nucleotide precursor UDP-N-acetylmuramoyl-L-alanine (UMA). This chain is UDP-N-acetylmuramoylalanine--D-glutamate ligase, found in Francisella tularensis subsp. novicida (strain U112).